We begin with the raw amino-acid sequence, 206 residues long: RNA pyrophosphohydrolase (206 aa).

A Nudix hydrolase domain is found at 6–150; the sequence is GYRPNVGIVI…KRDVYRKVMK (145 aa). The short motif at 38 to 59 is the Nudix box element; it reads GGINEGENIETAMYRELYEEVG. Basic and acidic residues predominate over residues 162 to 191; it reads KPETVEKPRVERTEKRDFQKRDNQKREFRK. Residues 162–206 are disordered; sequence KPETVEKPRVERTEKRDFQKRDNQKREFRKSARMWNNSHQKGKAQ.

This sequence belongs to the Nudix hydrolase family. RppH subfamily. It depends on a divalent metal cation as a cofactor.

Functionally, accelerates the degradation of transcripts by removing pyrophosphate from the 5'-end of triphosphorylated RNA, leading to a more labile monophosphorylated state that can stimulate subsequent ribonuclease cleavage. The sequence is that of RNA pyrophosphohydrolase from Actinobacillus pleuropneumoniae serotype 5b (strain L20).